The chain runs to 511 residues: MDPESLGVRDSDLVRAGLAIGVAILAIIVLFPGIRYKGGLVNNKKPFELSWTNAKRRFQSGARGLITTAFNQNDGKHKDAFYMVTDNGVEMIIHPKYAHEIRNDERFSISAYNEQSFHGRIPGFEMFKENVVEEQLFINAVRSRLTRSLGKLLGPISEEVTSALRQHWTDNKEWHSISLHSAVLPVIAQQSSRVFLGEELCHNADWMRITVNHTVSFFMAVEALRVWPKILRPLAARFSPMCKNLRAEIEEARRIITPILENRRAQQQAHSKHAASTRPNDLIEWLEETADGRSYDAARAQLKISVAAIHTTSDLLTQTLFNIADKPALIQDLRKEIMSTIGTHGWEKAALYNLKLMDSVLKETQRLKPISIGTMVRVTLDDVTLSDGLRIPKGTKTLVSCHNMWDKGIYDHADQFDGYRFYELRKLPGQENSSQLVSTSPDHFAFGHGLHACPGRFFAAAEVKITLCHILLKYDIRLVGERPNVIEHGVAQYANAWGQIEIKRREEEIAL.

The helical transmembrane segment at 14 to 34 (VRAGLAIGVAILAIIVLFPGI) threads the bilayer. Heme is bound at residue Cys453.

Belongs to the cytochrome P450 family. The cofactor is heme.

Its subcellular location is the membrane. It functions in the pathway secondary metabolite biosynthesis; terpenoid biosynthesis. Its function is as follows. Cytochrome P450 monooxygenase; part of the cluster that mediates the biosynthesis of shearones, diterpenoid pyrones (DPs) which are structurally diverse meroterpenoids consisting of a diterpene linked by a pyrone, and which may exhibit a range of bioactivities. Whitin the pathway, esdpI takes part in the molecular scaffold modification via the hydroxylation at C-20 and can transform shearone C into shearone G. The molecular scaffold is commonly biosynthesized by a series of enzymes including the non-reducing polyketide synthase (NR-PKS) esdpA that generates an alpha-pyrone; the prenyltransferase esdpC that attaches a geranylgeranyl pyrophosphate (GGPP) produced by the GGPP synthase (GGPPS) esdpD onto the pyrone unit; the FAD-dependent monooxygenase esdpE that converts an olefin on the diterpene unit into an epoxide; and the terpene cyclase esdpB that catalyzes the cyclization reactions to give the molecular backbone shearone A. In the modification steps, esdpF oxidizes the hydroxy group to a ketone at C-3 and esdpG then attaches hydroxy groups at both C-11 and C-12. After that, esdpI hydroxylates at C-20 and esdpH hydroxylates at C-6'. The ether bridge is generated by nucleophilic attack of the hydroxy group at C-20 to the carbonyl carbon at C-3. EsdpH can also functions prior to esdpI. The different combinations of these modification enzymes lead to the production of diverse shearone derivatives, shearone I being the end product of the pathway. The alpha-ketoglutarate-dependent dioxygenase esdpJ seems not to be involved in this pathway. The chain is Cytochrome P450 monooxygenase esdpI from Penicillium shearii (Eupenicillium shearii).